A 358-amino-acid chain; its full sequence is UDP-N-acetylglucosamine--N-acetylmuramyl-(pentapeptide) pyrophosphoryl-undecaprenol N-acetylglucosamine transferase (358 aa).

Positions 196 and 287 each coordinate UDP-N-acetyl-alpha-D-glucosamine.

It belongs to the glycosyltransferase 28 family. MurG subfamily.

The protein localises to the cell membrane. The catalysed reaction is Mur2Ac(oyl-L-Ala-gamma-D-Glu-L-Lys-D-Ala-D-Ala)-di-trans,octa-cis-undecaprenyl diphosphate + UDP-N-acetyl-alpha-D-glucosamine = beta-D-GlcNAc-(1-&gt;4)-Mur2Ac(oyl-L-Ala-gamma-D-Glu-L-Lys-D-Ala-D-Ala)-di-trans,octa-cis-undecaprenyl diphosphate + UDP + H(+). The protein operates within cell wall biogenesis; peptidoglycan biosynthesis. In terms of biological role, cell wall formation. Catalyzes the transfer of a GlcNAc subunit on undecaprenyl-pyrophosphoryl-MurNAc-pentapeptide (lipid intermediate I) to form undecaprenyl-pyrophosphoryl-MurNAc-(pentapeptide)GlcNAc (lipid intermediate II). This is UDP-N-acetylglucosamine--N-acetylmuramyl-(pentapeptide) pyrophosphoryl-undecaprenol N-acetylglucosamine transferase from Streptococcus uberis (strain ATCC BAA-854 / 0140J).